We begin with the raw amino-acid sequence, 325 residues long: Small ribosomal subunit protein uS2 (325 aa).

Basic and acidic residues predominate over residues 212–226 (KEEQAKAEAERERLA). The segment at 212–325 (KEEQAKAEAE…TEPKASTGNW (114 aa)) is disordered. 2 stretches are compositionally biased toward low complexity: residues 234 to 247 (QPAA…QWAD) and 261 to 289 (PVTT…TGSG). Positions 290-300 (FNQDDWSVPTT) are enriched in polar residues.

The protein belongs to the universal ribosomal protein uS2 family. In terms of assembly, component of the small ribosomal subunit. Mature ribosomes consist of a small (40S) and a large (60S) subunit. The 40S subunit contains about 33 different proteins and 1 molecule of RNA (18S). The 60S subunit contains about 49 different proteins and 3 molecules of RNA (28S, 5.8S and 5S). Interacts with ribosomal protein S21.

It localises to the cytoplasm. Required for the assembly and/or stability of the 40S ribosomal subunit. Required for the processing of the 20S rRNA-precursor to mature 18S rRNA in a late step of the maturation of 40S ribosomal subunits. In Suberites domuncula (Sponge), this protein is Small ribosomal subunit protein uS2.